The sequence spans 4235 residues: Tenellin synthetase (4235 aa).

Residues 15-455 (SEPIAIVGSA…GTNAHAIIER (441 aa)) enclose the Ketosynthase family 3 (KS3) domain. Active-site for beta-ketoacyl synthase activity residues include cysteine 189, histidine 326, and histidine 375. The malonyl-CoA:ACP transacylase (MAT) domain stretch occupies residues 590–924 (IFTGQGAQWP…ANDAVAFSTA (335 aa)). The segment at 993 to 1135 (HELLGRRMPD…GRIAVHLGAK (143 aa)) is N-terminal hotdog fold. Positions 993 to 1310 (HELLGRRMPD…GFEVRAVGEP (318 aa)) are dehydratase (DH) domain. Residues 993 to 1313 (HELLGRRMPD…VRAVGEPDAS (321 aa)) form the PKS/mFAS DH domain. Histidine 1025 (proton acceptor; for dehydratase activity) is an active-site residue. Residues 1158–1313 (LQQLDCEKLY…VRAVGEPDAS (156 aa)) are C-terminal hotdog fold. Residue aspartate 1217 is the Proton donor; for dehydratase activity of the active site. The tract at residues 1459–1652 (RLYTEDKGMH…FSGVDHIVHD (194 aa)) is methyltransferase (MT) domain. The tract at residues 2208 to 2381 (TYLMVGAAGG…AASIIHVGHV (174 aa)) is ketoreductase (KR) domain. In terms of domain architecture, Carrier 1 spans 2500 to 2580 (EAAAAALKGF…QLSALAAKLA (81 aa)). Serine 2540 is subject to O-(pantetheine 4'-phosphoryl)serine. Positions 2587-2709 (RAQLEEASGN…EISSNGFFTQ (123 aa)) are disordered. The segment covering 2605–2619 (NDKETGPSKKGKAQE) has biased composition (basic and acidic residues). Polar residues-rich tracts occupy residues 2645-2659 (GGSSTANFTTSSSVS) and 2666-2678 (QESTLQSSENNGE). The span at 2679–2695 (STPSKSSNCNSDSGSDN) shows a compositional bias: low complexity. The interval 2720–3163 (REAPMSPAQS…TAQSVGDCVV (444 aa)) is condensation (C) domain. The interval 3197-3609 (CQQHSTKSAI…DGTLLCFGRI (413 aa)) is adenylation (A) (KR) domain. The interval 3724–3750 (DEAAAATSPSNDNNNNNTPSGGGGEKM) is disordered. Over residues 3726–3742 (AAAATSPSNDNNNNNTP) the composition is skewed to low complexity. In terms of domain architecture, Carrier 2 spans 3748 to 3833 (EKMTVRQGEL…GMARCVAEQR (86 aa)). Serine 3793 is modified (O-(pantetheine 4'-phosphoryl)serine). The tract at residues 3860–3889 (EKLQHSSASSSSSSSSSSAGSSSTQRPRKT) is disordered. Residues 3865-3882 (SSASSSSSSSSSSAGSSS) are compositionally biased toward low complexity. The segment at 3896-4141 (LTGATGFLGG…LDFGQVDKVV (246 aa)) is reductase (RED) domain.

This sequence in the C-terminal section; belongs to the NRP synthetase family.

It functions in the pathway secondary metabolite biosynthesis. Functionally, hybrid PKS-NRPS synthetase; part of the gene cluster that mediates the biosynthesis of tenellin-type 2-pyridones, iron-chelating compounds involved in iron stress tolerance, competition with the natural competitor fungus Metarhizium robertsii and insect hosts infection. TenS catalyzes the assembly of the polyketide-amino acid backbone. Because tenS lacks a designated enoylreductase (ER) domain, the required activity is provided the enoyl reductase tenC. Upon formation of the polyketide backbone on the thiotemplate, the triketide is transferred to the NRPS module and linked to tyrosine to produce the pyrrolidine-2-dione intermediates, including pretellinin A, 11-hydropretellenin A, 12-hydropretellenin A, 13-hydropretellenin A, 14-hydropretellenin A, 12-oxopretellenin A and prototellinin D. The pathway begins with the assembly of the polyketide-amino acid backbone by the hybrid PKS-NRPS tenS with the help of the enoyl reductase tenC. These enzymes catalyze the synthesis of the pyrrolidine-2-dione intermediates pretellinin A, 11-hydropretellenin A, 12-hydropretellenin A, 13-hydropretellenin A, 14-hydropretellenin A, 12-oxopretellenin A and prototellinin D. The cytochrome P450 monooxygenase tenA then catalyzes an oxidative ring expansion of pretenellin A and 14-hydropretellenin A to form the 2-pyridone core, leading to pretenellin B and pyridovericin, respectively. The cytochrome P450 monooxygenase tenB is then required for the selective N-hydroxylation of the 2-pyridone nitrogen of yield tellinin and 15-hydroxytellenin (15-HT), respectively. The UDP-glucosyltransferase GT1 and the methyltransferase MT1, located outside the tenS gene cluster, contribute to the stepwise glycosylation and methylation of 15-HT to obtain the glycoside pyridovericin-N-O-(4-O-methyl-beta-D-glucopyranoside) (PMGP). Additional related compounds such as 1-O-methyl-15-HT, (8Z)-1-O-methyl-15-HT, and O-methyltenellin A are also produced but the enzymes involved in their biosynthesis have still to be determined. This is Tenellin synthetase from Beauveria bassiana (strain ARSEF 2860) (White muscardine disease fungus).